The following is a 293-amino-acid chain: Probable xyloglucan endotransglucosylase/hydrolase protein B (293 aa).

The signal sequence occupies residues 1–21 (MASSLLILCLVLVSLASSALC). The region spanning 23-220 (APRRPVDVPF…WSKAPFVAEY (198 aa)) is the GH16 domain. Residue E106 is the Nucleophile of the active site. The active-site Proton donor is E110. E110 provides a ligand contact to xyloglucan. N114 is a glycosylation site (N-linked (GlcNAc...) asparagine). Xyloglucan contacts are provided by residues 123–125 (QTN), 133–135 (DRE), 199–200 (DW), and G204. Intrachain disulfides connect C228–C237 and C274–C287. R279 provides a ligand contact to xyloglucan.

It belongs to the glycosyl hydrolase 16 family. XTH group 1 subfamily. Contains at least one intrachain disulfide bond essential for its enzymatic activity. As to expression, predominantly expressed in the phloem fibers of growing internodes. Weakly or not expressed in the xylem. In the internode, it is expressed closer to the bottom of the internode compared to XTHA.

It is found in the secreted. Its subcellular location is the cell wall. The protein resides in the extracellular space. It localises to the apoplast. It catalyses the reaction breaks a beta-(1-&gt;4) bond in the backbone of a xyloglucan and transfers the xyloglucanyl segment on to O-4 of the non-reducing terminal glucose residue of an acceptor, which can be a xyloglucan or an oligosaccharide of xyloglucan.. In terms of biological role, catalyzes xyloglucan endohydrolysis (XEH) and/or endotransglycosylation (XET). Cleaves and religates xyloglucan polymers, an essential constituent of the primary cell wall, and thereby participates in cell wall construction of growing tissues. In Phaseolus angularis (Azuki bean), this protein is Probable xyloglucan endotransglucosylase/hydrolase protein B (XTHB).